Consider the following 406-residue polypeptide: UPF0754 membrane protein Cyan7425_4067 (406 aa).

The chain crosses the membrane as a helical span at residues 381 to 401; that stretch reads IVTLGGVLGLLIGIAQSVLLL.

Belongs to the UPF0754 family.

It is found in the cell inner membrane. This chain is UPF0754 membrane protein Cyan7425_4067, found in Cyanothece sp. (strain PCC 7425 / ATCC 29141).